A 383-amino-acid chain; its full sequence is Izumo sperm-egg fusion protein 1 (383 aa).

The signal sequence occupies residues 1-21 (MGLHFTLLLAALANCLCPARL). Cystine bridges form between Cys-22/Cys-149, Cys-25/Cys-152, Cys-135/Cys-159, Cys-139/Cys-165, and Cys-182/Cys-233. The Extracellular portion of the chain corresponds to 22 to 306 (CIICDPFVVA…HRPEKKLKSR (285 aa)). An important for interaction with IZUMO1R region spans residues 148–160 (WCNKCEKQMHFCR). One can recognise an Ig-like C2-type domain in the interval 167–251 (ERQIEVHRLE…PATIIYYHVT (85 aa)). Asn-204 is a glycosylation site (N-linked (GlcNAc...) asparagine). A helical transmembrane segment spans residues 307-327 (LLILLILGFVVLVASVIASVL). The Cytoplasmic portion of the chain corresponds to 328–383 (HFRKTRVKSKNSNVENKTSAAEFKSEAESPQKMGSRKLSQAEFHTDSSDKVEEADN). The interval 335-383 (KSKNSNVENKTSAAEFKSEAESPQKMGSRKLSQAEFHTDSSDKVEEADN) is disordered. The span at 337–346 (KNSNVENKTS) shows a compositional bias: polar residues. 3 positions are modified to phosphoserine: Ser-339, Ser-346, and Ser-366. A compositionally biased stretch (basic and acidic residues) spans 370 to 383 (FHTDSSDKVEEADN). The residue at position 372 (Thr-372) is a Phosphothreonine.

The protein belongs to the Izumo family. Monomer, homodimer; disulfide-linked and homooligomer; depending on the context. Interacts with IZUMO1R/JUNO. IZUMO1 and IZUMO1R/JUNO form a complex with 1:1 stoichiometry. In gamete recognition, IZUMO1R/JUNO first binds to monomeric IZUMO1. The weak, but specific interaction with IZUMO1R/JUNO induces IZUMO1 homodimerization. The process follows a tight binding phase where IZUMO1 bends the entire structure towards the sperm membrane side through a thiol-disulfide exchange reaction. The molecule no longer binds to IZUMO1R/JUNO and instead binds to a putative second oocyte receptor. Interacts with ACE3. Part of a oolemmal binding multimeric complex (IZUMO1 complex) composed at least of IZUMO1 and GLIPR1L1; the complex assemblage is influenced by the maturation status of the male germ cell. Interacts with GLIPR1L1. Interacts with FREY; the interaction retains IZUMO1 at the endoplasmic reticulum membrane and coordinates IZUMO1 complex assembly. Interacts with WDR54. Forms a complex with SPACA6 and TMEM81 on spermatocyte cell membrane. Post-translationally, N-glycosylated. Glycosylation is not essential for fusion and for proper protein trafficking in sperm. In terms of processing, phosphorylated. The cytoplasmic C-terminus is phosphorylated and undergoes phosphorylation changes during epididymal transit. In terms of tissue distribution, expressed in sperm (at protein level).

The protein resides in the cell membrane. Its subcellular location is the cytoplasmic vesicle. It localises to the secretory vesicle. It is found in the acrosome membrane. Essential sperm cell-surface protein required for fertilization by acting as a ligand for IZUMO1R/JUNO receptor on egg. The IZUMO1:IZUMO1R/JUNO interaction is a necessary adhesion event between sperm and egg that is required for fertilization but is not sufficient for cell fusion. The ligand-receptor interaction probably does not act as a membrane 'fusogen'. Plays a critical role in sperm-oolemma binding prior to plasma membrane fusion. Can mediate cell-cell fusion in cultured mammalian cells independently of its binding to IZUMO1R/JUNO. The chain is Izumo sperm-egg fusion protein 1 from Rattus norvegicus (Rat).